Consider the following 241-residue polypeptide: Homeobox protein TGIF2LX (241 aa).

Disordered regions lie at residues 1–58 (MEAA…GNLP) and 125–207 (KTGK…ELVS). Positions 10 to 39 (ETQSPVQKDSPAKTQSPAQDTSIMSRNNAD) are enriched in polar residues. The homeobox; TALE-type DNA-binding region spans 48-111 (EHKKKRKGNL…INARRRILPD (64 aa)).

Belongs to the TALE/TGIF homeobox family.

Its subcellular location is the nucleus. Its function is as follows. May have a transcription role in testis. The chain is Homeobox protein TGIF2LX (TGIF2LX) from Pan troglodytes (Chimpanzee).